The chain runs to 199 residues: MKIVLASNNRGKLAELRAMLAPLGFELITQGELGIPEAPEPYHTFVENALAKARHASAHSGLPALADDAGLCVDAFGGLPGVQTAFYATRFGYEKGDDNNVRALLEQMRDVDNRRAALVSTLVAVRSEQDPEPLIAVGRVVGEIARAPVGSHGFGFDPVMLIPEFGQTFAQLPVEVKNANSHRGRAARAMLALMRERWL.

Position 7–12 (7–12 (SNNRGK)) interacts with substrate. D68 acts as the Proton acceptor in catalysis. Residue D68 participates in Mg(2+) binding. Substrate contacts are provided by residues A69, 154 to 157 (FGFD), K177, and 182 to 183 (HR).

It belongs to the HAM1 NTPase family. Homodimer. Mg(2+) serves as cofactor.

It carries out the reaction XTP + H2O = XMP + diphosphate + H(+). It catalyses the reaction dITP + H2O = dIMP + diphosphate + H(+). The enzyme catalyses ITP + H2O = IMP + diphosphate + H(+). Functionally, pyrophosphatase that catalyzes the hydrolysis of nucleoside triphosphates to their monophosphate derivatives, with a high preference for the non-canonical purine nucleotides XTP (xanthosine triphosphate), dITP (deoxyinosine triphosphate) and ITP. Seems to function as a house-cleaning enzyme that removes non-canonical purine nucleotides from the nucleotide pool, thus preventing their incorporation into DNA/RNA and avoiding chromosomal lesions. The polypeptide is dITP/XTP pyrophosphatase (Albidiferax ferrireducens (strain ATCC BAA-621 / DSM 15236 / T118) (Rhodoferax ferrireducens)).